The sequence spans 1272 residues: Fused isobutyryl-CoA mutase (1272 aa).

Positions 20 to 158 constitute a B12-binding domain; sequence RLRFVTAAAL…ARCAEGARAA (139 aa). Position 33 (H33) interacts with adenosylcob(III)alamin. Residues 163–536 are GTPase chaperone MeaI; the sequence is ESQVGAWAAE…YRHVAEALRK (374 aa). The interval 193–240 is disordered; the sequence is GAVARNPSSEASRVAAAGRGDHLDRGVRAASTADTADTANTANTANTA. Residues 221-240 show a composition bias toward low complexity; sequence AASTADTADTANTANTANTA. 334–339 serves as a coordination point for GTP; the sequence is GAGKSS. Mg(2+)-binding residues include S338, I363, D364, and D377. GTP is bound at residue R380. Positions 429 and 430 each coordinate Mg(2+). Residue 476-479 participates in GTP binding; that stretch reads NKFD. Positions 537–758 are linker; sequence HGLRSGGGRL…MLDNLPGYFP (222 aa). Composition is skewed to low complexity over residues 614-631 and 639-663; these read TVAT…KANA and ANAS…ATPT. Residues 614 to 667 form a disordered region; it reads TVATSASPGASASSKANACTSTSSKANASPGANTTANSNASATSGTATPTDALN. Positions 766, 801, 907, 951, 1000, 1035, and 1040 each coordinate substrate. Positions 1152 and 1271 each coordinate GTP.

Belongs to the IcmF family. As to quaternary structure, homodimer. The cofactor is adenosylcob(III)alamin. It depends on Mg(2+) as a cofactor.

The catalysed reaction is 2-methylpropanoyl-CoA = butanoyl-CoA. It catalyses the reaction GTP + H2O = GDP + phosphate + H(+). In terms of biological role, catalyzes the reversible interconversion of isobutyryl-CoA and n-butyryl-CoA, using radical chemistry. Also exhibits GTPase activity, associated with its G-protein domain (MeaI) that functions as a chaperone that assists cofactor delivery and proper holo-enzyme assembly. Does not exhibit methylmalonyl-CoA mutase (MCM) activity. The protein is Fused isobutyryl-CoA mutase of Paraburkholderia xenovorans (strain LB400).